The following is a 678-amino-acid chain: MPDPSTYRPAPGSIPVEPGVYRFRDPHGRVIYVGKAKSLRSRLNSYFADLSGLAPRTRQMVMTAASVEWTVVSTEVEALQLEYNWIKEFDPRFNIRYRDDKSYPVLAVTLNEEYPRLKVYRGPRRKGVRYFGPYSHAWAIRETLDLLTRVFPARTCSNGVFKRHSQIDRPCLLGYIDKCAAPCVGRVSAEEHRRIVLDFCDFLAGKTDRLIREMEQQMNAAAEELDFERAARLRDNIGAMRRAMEKQTVVLGDGTDADVVAFADDELEAAVQVFHVRGGRVRGQRGWVIEKSGEPGESTPAYLVEQFLTQFYGDQAELGGAADEATNPVPRQVLVPVLPDTTEELETWLSQLRGSRVSLRVPQRGDKRALAETVKRNAEQALTQHKLKRAGDFTARSAALQSIQEALGLADAPLRIECVDISHVQGTDVVASLVVFEDGLPRKSDYRHFAIREAAGDGRSDDVASIAEVTRRRFHRHLRDAEAAPEGRPEQGPRASARPEQGPRASARPARFAYPPNLFVVDGGAPQVNAAAAVLDELGISDVAVIGLAKRLEEVWVPNLDGTAPDPVIFPRNSDGLYLLQRVRDEAHRFAISYHRSKRSKRMTASALDSVRGLGEHRRKALVTHFGSLARLKQASVDEITAVPGIGAATARAVLEALGADSGAAPTDIGNDQSRISG.

A GIY-YIG domain is found at 16 to 95 (VEPGVYRFRD…IKEFDPRFNI (80 aa)). The UVR domain occupies 208–243 (DRLIREMEQQMNAAAEELDFERAARLRDNIGAMRRA). The interval 477 to 508 (HLRDAEAAPEGRPEQGPRASARPEQGPRASAR) is disordered. Residues 479–491 (RDAEAAPEGRPEQ) show a composition bias toward basic and acidic residues.

It belongs to the UvrC family. In terms of assembly, interacts with UvrB in an incision complex.

Its subcellular location is the cytoplasm. Its function is as follows. The UvrABC repair system catalyzes the recognition and processing of DNA lesions. UvrC both incises the 5' and 3' sides of the lesion. The N-terminal half is responsible for the 3' incision and the C-terminal half is responsible for the 5' incision. This chain is UvrABC system protein C, found in Mycolicibacterium vanbaalenii (strain DSM 7251 / JCM 13017 / BCRC 16820 / KCTC 9966 / NRRL B-24157 / PYR-1) (Mycobacterium vanbaalenii).